A 247-amino-acid chain; its full sequence is tRNA uridine(34) hydroxylase (247 aa).

One can recognise a Rhodanese domain in the interval Ile-123–Asn-217. Cys-177 acts as the Cysteine persulfide intermediate in catalysis.

It belongs to the TrhO family.

It catalyses the reaction uridine(34) in tRNA + AH2 + O2 = 5-hydroxyuridine(34) in tRNA + A + H2O. Catalyzes oxygen-dependent 5-hydroxyuridine (ho5U) modification at position 34 in tRNAs. This chain is tRNA uridine(34) hydroxylase, found in Rickettsia bellii (strain RML369-C).